A 262-amino-acid polypeptide reads, in one-letter code: 5'-nucleotidase SurE (262 aa).

A divalent metal cation is bound by residues Asp-8, Asp-9, Ser-39, and Asn-95.

Belongs to the SurE nucleotidase family. The cofactor is a divalent metal cation.

The protein localises to the cytoplasm. It carries out the reaction a ribonucleoside 5'-phosphate + H2O = a ribonucleoside + phosphate. In terms of biological role, nucleotidase that shows phosphatase activity on nucleoside 5'-monophosphates. The protein is 5'-nucleotidase SurE of Methanothermobacter thermautotrophicus (strain ATCC 29096 / DSM 1053 / JCM 10044 / NBRC 100330 / Delta H) (Methanobacterium thermoautotrophicum).